The sequence spans 227 residues: ATP synthase subunit a (227 aa).

5 consecutive transmembrane segments (helical) span residues 16–36, 79–99, 105–125, 176–196, and 202–222; these read AFVYAFHFCLVALIILIVAYI, LVATIGFIVFFSNVIGIIPGF, SLNLTLVLALVVFIYYNFEGI, LFLLAMLTLAPWFAPLPAFAL, and VLQTFIFMMLTYVYLAGAVAI.

Belongs to the ATPase A chain family. As to quaternary structure, F-type ATPases have 2 components, CF(1) - the catalytic core - and CF(0) - the membrane proton channel. CF(1) has five subunits: alpha(3), beta(3), gamma(1), delta(1), epsilon(1). CF(0) has three main subunits: a(1), b(2) and c(9-12). The alpha and beta chains form an alternating ring which encloses part of the gamma chain. CF(1) is attached to CF(0) by a central stalk formed by the gamma and epsilon chains, while a peripheral stalk is formed by the delta and b chains.

The protein localises to the cell inner membrane. In terms of biological role, key component of the proton channel; it plays a direct role in the translocation of protons across the membrane. In Campylobacter concisus (strain 13826), this protein is ATP synthase subunit a.